The primary structure comprises 929 residues: Isoleucine--tRNA ligase (929 aa).

The short motif at 58 to 68 is the 'HIGH' region element; the sequence is PYANGDIHIGH. Glu568 contributes to the L-isoleucyl-5'-AMP binding site. Positions 609–613 match the 'KMSKS' region motif; the sequence is KMSKS. Lys612 lines the ATP pocket. 4 residues coordinate Zn(2+): Cys892, Cys895, Cys912, and Cys915.

Belongs to the class-I aminoacyl-tRNA synthetase family. IleS type 1 subfamily. As to quaternary structure, monomer. It depends on Zn(2+) as a cofactor.

Its subcellular location is the cytoplasm. It carries out the reaction tRNA(Ile) + L-isoleucine + ATP = L-isoleucyl-tRNA(Ile) + AMP + diphosphate. Catalyzes the attachment of isoleucine to tRNA(Ile). As IleRS can inadvertently accommodate and process structurally similar amino acids such as valine, to avoid such errors it has two additional distinct tRNA(Ile)-dependent editing activities. One activity is designated as 'pretransfer' editing and involves the hydrolysis of activated Val-AMP. The other activity is designated 'posttransfer' editing and involves deacylation of mischarged Val-tRNA(Ile). The polypeptide is Isoleucine--tRNA ligase (Thiobacillus denitrificans (strain ATCC 25259 / T1)).